Consider the following 384-residue polypeptide: Cobalt-precorrin-5B C(1)-methyltransferase (384 aa).

The protein belongs to the CbiD family.

It carries out the reaction Co-precorrin-5B + S-adenosyl-L-methionine = Co-precorrin-6A + S-adenosyl-L-homocysteine. It functions in the pathway cofactor biosynthesis; adenosylcobalamin biosynthesis; cob(II)yrinate a,c-diamide from sirohydrochlorin (anaerobic route): step 6/10. In terms of biological role, catalyzes the methylation of C-1 in cobalt-precorrin-5B to form cobalt-precorrin-6A. The protein is Cobalt-precorrin-5B C(1)-methyltransferase of Ruminiclostridium cellulolyticum (strain ATCC 35319 / DSM 5812 / JCM 6584 / H10) (Clostridium cellulolyticum).